We begin with the raw amino-acid sequence, 582 residues long: 2-succinyl-5-enolpyruvyl-6-hydroxy-3-cyclohexene-1-carboxylate synthase (582 aa).

This sequence belongs to the TPP enzyme family. MenD subfamily. As to quaternary structure, homodimer. It depends on Mg(2+) as a cofactor. Mn(2+) serves as cofactor. Thiamine diphosphate is required as a cofactor.

It carries out the reaction isochorismate + 2-oxoglutarate + H(+) = 5-enolpyruvoyl-6-hydroxy-2-succinyl-cyclohex-3-ene-1-carboxylate + CO2. Its pathway is quinol/quinone metabolism; 1,4-dihydroxy-2-naphthoate biosynthesis; 1,4-dihydroxy-2-naphthoate from chorismate: step 2/7. It participates in cofactor biosynthesis; phylloquinone biosynthesis. Its function is as follows. Catalyzes the thiamine diphosphate-dependent decarboxylation of 2-oxoglutarate and the subsequent addition of the resulting succinic semialdehyde-thiamine pyrophosphate anion to isochorismate to yield 2-succinyl-5-enolpyruvyl-6-hydroxy-3-cyclohexene-1-carboxylate (SEPHCHC). This chain is 2-succinyl-5-enolpyruvyl-6-hydroxy-3-cyclohexene-1-carboxylate synthase, found in Synechococcus elongatus (strain ATCC 33912 / PCC 7942 / FACHB-805) (Anacystis nidulans R2).